Consider the following 212-residue polypeptide: Ribosomal RNA small subunit methyltransferase G (212 aa).

Residues glycine 73, phenylalanine 78, 124–125, and arginine 137 each bind S-adenosyl-L-methionine; that span reads IE.

This sequence belongs to the methyltransferase superfamily. RNA methyltransferase RsmG family.

The protein resides in the cytoplasm. Functionally, specifically methylates the N7 position of a guanine in 16S rRNA. This chain is Ribosomal RNA small subunit methyltransferase G, found in Karelsulcia muelleri (strain GWSS) (Sulcia muelleri).